A 193-amino-acid chain; its full sequence is Adenylate kinase (193 aa).

Residue 10–18 (GVPGVGGTT) coordinates ATP.

It belongs to the archaeal adenylate kinase family. As to quaternary structure, monomer.

It is found in the cytoplasm. It catalyses the reaction AMP + ATP = 2 ADP. The protein is Adenylate kinase of Methanococcus aeolicus (strain ATCC BAA-1280 / DSM 17508 / OCM 812 / Nankai-3).